The primary structure comprises 327 residues: Glycerol-3-phosphate dehydrogenase [NAD(P)+] (327 aa).

Tryptophan 15, arginine 35, and lysine 109 together coordinate NADPH. Sn-glycerol 3-phosphate is bound by residues lysine 109, glycine 137, and serine 139. Position 141 (alanine 141) interacts with NADPH. Sn-glycerol 3-phosphate contacts are provided by lysine 192, aspartate 245, serine 255, arginine 256, and asparagine 257. The active-site Proton acceptor is the lysine 192. Residue arginine 256 coordinates NADPH. Residues leucine 275 and glutamate 277 each coordinate NADPH.

The protein belongs to the NAD-dependent glycerol-3-phosphate dehydrogenase family.

It localises to the cytoplasm. It carries out the reaction sn-glycerol 3-phosphate + NAD(+) = dihydroxyacetone phosphate + NADH + H(+). It catalyses the reaction sn-glycerol 3-phosphate + NADP(+) = dihydroxyacetone phosphate + NADPH + H(+). It participates in membrane lipid metabolism; glycerophospholipid metabolism. Functionally, catalyzes the reduction of the glycolytic intermediate dihydroxyacetone phosphate (DHAP) to sn-glycerol 3-phosphate (G3P), the key precursor for phospholipid synthesis. The sequence is that of Glycerol-3-phosphate dehydrogenase [NAD(P)+] from Chelativorans sp. (strain BNC1).